A 295-amino-acid chain; its full sequence is 33 kDa chaperonin (295 aa).

Disulfide bonds link cysteine 236-cysteine 238 and cysteine 269-cysteine 272.

Belongs to the HSP33 family. In terms of processing, under oxidizing conditions two disulfide bonds are formed involving the reactive cysteines. Under reducing conditions zinc is bound to the reactive cysteines and the protein is inactive.

The protein localises to the cytoplasm. Redox regulated molecular chaperone. Protects both thermally unfolding and oxidatively damaged proteins from irreversible aggregation. Plays an important role in the bacterial defense system toward oxidative stress. This Citrifermentans bemidjiense (strain ATCC BAA-1014 / DSM 16622 / JCM 12645 / Bem) (Geobacter bemidjiensis) protein is 33 kDa chaperonin.